A 94-amino-acid chain; its full sequence is Large ribosomal subunit protein uL23 (94 aa).

The protein belongs to the universal ribosomal protein uL23 family. As to quaternary structure, part of the 50S ribosomal subunit. Contacts protein L29, and trigger factor when it is bound to the ribosome.

One of the early assembly proteins it binds 23S rRNA. One of the proteins that surrounds the polypeptide exit tunnel on the outside of the ribosome. Forms the main docking site for trigger factor binding to the ribosome. The sequence is that of Large ribosomal subunit protein uL23 from Listeria innocua serovar 6a (strain ATCC BAA-680 / CLIP 11262).